The primary structure comprises 155 residues: Protein-export protein SecB (155 aa).

It belongs to the SecB family. Homotetramer, a dimer of dimers. One homotetramer interacts with 1 SecA dimer.

The protein resides in the cytoplasm. In terms of biological role, one of the proteins required for the normal export of preproteins out of the cell cytoplasm. It is a molecular chaperone that binds to a subset of precursor proteins, maintaining them in a translocation-competent state. It also specifically binds to its receptor SecA. This is Protein-export protein SecB from Shigella sonnei (strain Ss046).